The chain runs to 297 residues: HTH-type transcriptional regulator IlvY (297 aa).

In terms of domain architecture, HTH lysR-type spans 1–58; it reads MDLRDLKTFLHLAESRHFGRSARAMHVSPSTLSRQIQRLEEDLGQPLFVRDNRTVTLT. Positions 18–37 form a DNA-binding region, H-T-H motif; that stretch reads FGRSARAMHVSPSTLSRQIQ.

Belongs to the LysR transcriptional regulatory family.

It localises to the cytoplasm. In terms of biological role, this protein activates the transcription of the ilvC gene in the presence of acetolactate or acetohydroxybutyrate. IlvY is also a negative regulator of its own expression. This is HTH-type transcriptional regulator IlvY (ilvY) from Escherichia coli (strain K12).